The sequence spans 777 residues: Serine/threonine-protein kinase PTK2 (777 aa).

The tract at residues 21–174 (NKLRGNNDST…ISSGSASSTN (154 aa)) is disordered. Residues 30-41 (TPAAAPAPVPTK) show a composition bias toward low complexity. 2 stretches are compositionally biased toward polar residues: residues 50 to 61 (AHISRSASTNTP) and 83 to 133 (RRST…SQHM). Residues 149 to 172 (SSVRGSSYSRHGSGSHISSGSASS) are compositionally biased toward low complexity. The region spanning 222 to 529 (DKDNKTIGSG…MEDLFNDPWF (308 aa)) is the Protein kinase domain. ATP-binding positions include 228–236 (IGSGGSSEV) and Lys252. Asp355 acts as the Proton acceptor in catalysis. 2 disordered regions span residues 564–705 (DAHP…EITE) and 728–764 (SVSG…KKVV). Composition is skewed to polar residues over residues 575–592 (TDTN…AGTH) and 648–672 (TNTT…TNEF). Residues 677–694 (NATTTDNDNVNTKATTAD) are compositionally biased toward low complexity. Positions 744-756 (NRSIHSNATSTGT) are enriched in polar residues.

It belongs to the protein kinase superfamily. Ser/Thr protein kinase family.

The catalysed reaction is L-seryl-[protein] + ATP = O-phospho-L-seryl-[protein] + ADP + H(+). It catalyses the reaction L-threonyl-[protein] + ATP = O-phospho-L-threonyl-[protein] + ADP + H(+). The chain is Serine/threonine-protein kinase PTK2 (PTK2) from Candida glabrata (strain ATCC 2001 / BCRC 20586 / JCM 3761 / NBRC 0622 / NRRL Y-65 / CBS 138) (Yeast).